The chain runs to 473 residues: Probable cytosolic iron-sulfur protein assembly protein 1 (473 aa).

The interval 1–25 is disordered; sequence MPSSTPGGSLKHLSDLTPPSQDRTW. WD repeat units lie at residues 11–58 and 62–104; these read KHLS…LLST and GHKR…GRAE. The interval 112–133 is disordered; that stretch reads GGLAEADRQEGDDTDGDEEDED. Residues 123–133 show a composition bias toward acidic residues; that stretch reads DDTDGDEEDED. 4 WD repeats span residues 144–183, 191–230, 235–313, and 341–380; these read GHDS…DNNF, EHSG…WGQV, GHEG…KPPP, and MHDL…KPPV. A disordered region spans residues 377-405; sequence KPPVHTTSEQDKPDSARETQKANGERTAP. Over residues 384-400 the composition is skewed to basic and acidic residues; that stretch reads SEQDKPDSARETQKANG. One copy of the WD 7 repeat lies at 438 to 473; the sequence is SQQQNFDNSEMDHANEEEVLLSTGDDGVVRVWTLER.

The protein belongs to the WD repeat CIA1 family.

Functionally, essential component of the cytosolic iron-sulfur (Fe/S) protein assembly machinery. Required for the maturation of extramitochondrial Fe/S proteins. This Coccidioides immitis (strain RS) (Valley fever fungus) protein is Probable cytosolic iron-sulfur protein assembly protein 1.